A 245-amino-acid polypeptide reads, in one-letter code: Tetraspanin-6 (245 aa).

Over Met-1–Ser-19 the chain is Cytoplasmic. The helical transmembrane segment at Val-20–Ile-40 threads the bilayer. Residues Trp-41–Asn-59 lie on the Extracellular side of the membrane. A helical transmembrane segment spans residues Val-60–Phe-80. Topologically, residues Ala-81 to Tyr-93 are cytoplasmic. The chain crosses the membrane as a helical span at residues Ala-94 to Phe-114. At Arg-115 to Glu-208 the chain is on the extracellular side. The N-linked (GlcNAc...) asparagine glycan is linked to Asn-134. A helical membrane pass occupies residues Met-209–Leu-229. Over Ala-230 to Val-245 the chain is Cytoplasmic.

This sequence belongs to the tetraspanin (TM4SF) family.

It is found in the membrane. The polypeptide is Tetraspanin-6 (TSPAN6) (Pongo abelii (Sumatran orangutan)).